The chain runs to 89 residues: UPF0335 protein OCAR_5086/OCA5_c28780 (89 aa).

This sequence belongs to the UPF0335 family.

The chain is UPF0335 protein OCAR_5086/OCA5_c28780 from Afipia carboxidovorans (strain ATCC 49405 / DSM 1227 / KCTC 32145 / OM5) (Oligotropha carboxidovorans).